Reading from the N-terminus, the 353-residue chain is GDSL esterase/lipase At5g03810 (353 aa).

The first 24 residues, 1 to 24 (MKMFITMSMCLSVIACFYAGVGTG), serve as a signal peptide directing secretion. The active-site Nucleophile is serine 37. 5 N-linked (GlcNAc...) asparagine glycosylation sites follow: asparagine 100, asparagine 255, asparagine 256, asparagine 260, and asparagine 320. Active-site residues include aspartate 328 and histidine 331.

This sequence belongs to the 'GDSL' lipolytic enzyme family.

The protein resides in the secreted. This is GDSL esterase/lipase At5g03810 from Arabidopsis thaliana (Mouse-ear cress).